We begin with the raw amino-acid sequence, 496 residues long: L-carnitine dehydrogenase/betainyl-CoA thioesterase (496 aa).

Residues 1 to 335 (MTTITKAACI…KRLWEKGGSP (335 aa)) form an L-carnitine dehydrogenase region. 11–16 (GGGVIG) provides a ligand contact to NAD(+). The betainyl-CoA thioesterase stretch occupies residues 336-496 (SKSLDASGPL…GAGRHVGQKR (161 aa)).

The protein in the N-terminal section; belongs to the 3-hydroxyacyl-CoA dehydrogenase family. L-carnitine dehydrogenase subfamily. In the C-terminal section; belongs to the betainyl-CoA thioesterase family. Homodimer.

The protein localises to the cytoplasm. It carries out the reaction carnitine + NAD(+) = 3-dehydrocarnitine + NADH + H(+). It catalyses the reaction N,N,N-trimethylglycyl-CoA + H2O = glycine betaine + CoA + H(+). The protein operates within amine and polyamine metabolism; carnitine metabolism. Multifunctional enzyme that catalyzes the NAD(+)-dependent oxidation of L-carnitine to 3-dehydrocarnitine and the cleavage of betainyl-CoA (N,N,N-trimethylglycyl-CoA) into glycine betaine and coenzyme A. Can also hydrolyze L-carnitinyl-CoA, but with much lower efficiency. Is involved in a L-carnitine degradation pathway that allows R.meliloti to grow on L-carnitine as the sole source of carbon and nitrogen. This chain is L-carnitine dehydrogenase/betainyl-CoA thioesterase, found in Rhizobium meliloti (strain 1021) (Ensifer meliloti).